Consider the following 229-residue polypeptide: ATP synthase subunit a (229 aa).

The next 6 helical transmembrane spans lie at 25-45, 86-106, 111-131, 142-162, 181-201, and 202-222; these read ADAI…SLIA, IATL…PGFF, NLNT…IVGI, FMGP…IGHL, LVLM…MMLM, and GVLV…IYIQ.

It belongs to the ATPase A chain family. F-type ATPases have 2 components, CF(1) - the catalytic core - and CF(0) - the membrane proton channel. CF(1) has five subunits: alpha(3), beta(3), gamma(1), delta(1), epsilon(1). CF(0) has three main subunits: a(1), b(2) and c(9-12). The alpha and beta chains form an alternating ring which encloses part of the gamma chain. CF(1) is attached to CF(0) by a central stalk formed by the gamma and epsilon chains, while a peripheral stalk is formed by the delta and b chains.

Its subcellular location is the cell inner membrane. Its function is as follows. Key component of the proton channel; it plays a direct role in the translocation of protons across the membrane. The protein is ATP synthase subunit a of Geobacter sulfurreducens (strain ATCC 51573 / DSM 12127 / PCA).